The sequence spans 616 residues: Large ribosomal subunit assembly factor BipA (616 aa).

A tr-type G domain is found at 8 to 204 (KKLRNIAIIA…AIVKHVEPPK (197 aa)). GTP is bound by residues 20–25 (DHGKTT) and 134–137 (NKVD).

This sequence belongs to the TRAFAC class translation factor GTPase superfamily. Classic translation factor GTPase family. BipA subfamily. In terms of assembly, monomer.

Its subcellular location is the cytoplasm. It carries out the reaction GTP + H2O = GDP + phosphate + H(+). A 50S ribosomal subunit assembly protein with GTPase activity, required for 50S subunit assembly at low temperatures, may also play a role in translation. Binds GTP and analogs. Binds the 70S ribosome between the 30S and 50S subunits, in a similar position as ribosome-bound EF-G; it contacts a number of ribosomal proteins, both rRNAs and the A-site tRNA. The chain is Large ribosomal subunit assembly factor BipA from Haemophilus influenzae (strain ATCC 51907 / DSM 11121 / KW20 / Rd).